The following is a 109-amino-acid chain: Aquaporin-2 (109 aa).

The Cytoplasmic segment spans residues 1-6 (SIAFSR). Residues 7–27 (AVFSEFLATLLFVFFGLGSAL) traverse the membrane as a helical segment. Residues 28–35 (NWPQALPS) are Extracellular-facing. The helical transmembrane segment at 36 to 54 (VLQIAMAFGLAIGTLVQTL) threads the bilayer. Residues 55–59 (GHISG) are Cytoplasmic-facing. The discontinuously helical intramembrane region spans 60–69 (AHINPAVTVA). Positions 63–65 (NPA) match the NPA 1 motif. At 70–80 (CLVGCHVSFLR) the chain is on the cytoplasmic side. A helical transmembrane segment spans residues 81–102 (ATFYVAAQLLGAVAGAALLHEL). At 103-109 (TPPDIRG) the chain is on the extracellular side.

It belongs to the MIP/aquaporin (TC 1.A.8) family. In terms of assembly, homotetramer. Serine phosphorylation is necessary and sufficient for expression at the apical membrane. Endocytosis is not phosphorylation-dependent. Post-translationally, N-glycosylated.

It localises to the apical cell membrane. The protein resides in the basolateral cell membrane. The protein localises to the cell membrane. It is found in the cytoplasmic vesicle membrane. Its subcellular location is the golgi apparatus. It localises to the trans-Golgi network membrane. It carries out the reaction H2O(in) = H2O(out). The catalysed reaction is glycerol(in) = glycerol(out). Forms a water-specific channel that provides the plasma membranes of renal collecting duct with high permeability to water, thereby permitting water to move in the direction of an osmotic gradient. Plays an essential role in renal water homeostasis. Could also be permeable to glycerol. The protein is Aquaporin-2 of Amblysomus hottentotus (Hottentot golden mole).